The chain runs to 304 residues: Cell surface-binding protein OPG105 (304 aa).

The Alpha-carbonic anhydrase domain occupies 1–235 (MSQQLSPINI…NDDTEVYYSG (235 aa)). Residues 1–275 (MSQQLSPINI…YQKYIEGNKT (275 aa)) are Virion surface-facing. The helical transmembrane segment at 276 to 294 (FAIIAIVFVYILTAILFLM) threads the bilayer. Residues 295-304 (SRRYSREKQN) are Intravirion-facing.

The protein belongs to the alpha-carbonic anhydrase family. In terms of assembly, homodimer; disulfide-linked. In terms of processing, apparently non-glycosylated.

The protein localises to the virion membrane. Its function is as follows. Binds to chondroitin sulfate on the cell surface to provide virion attachment to target cell. This chain is Cell surface-binding protein OPG105 (OPG105), found in Homo sapiens (Human).